The following is a 649-amino-acid chain: DNA topoisomerase 3 (649 aa).

The Toprim domain maps to 1 to 134 (MRLFIAEKPS…KRQQVRRCLI (134 aa)). Mg(2+) contacts are provided by glutamate 7, aspartate 103, and aspartate 105. The 449-residue stretch at 155–603 (FVPLCVSALA…PLVGTLYQLI (449 aa)) folds into the Topo IA-type catalytic domain. Positions 194–199 (SVGRVQ) are interaction with DNA. Tyrosine 328 functions as the O-(5'-phospho-DNA)-tyrosine intermediate in the catalytic mechanism. The disordered stretch occupies residues 614-649 (FRGIVAPGGGDKKKSAPRKRAGKKSPPAAETGRQTE).

The protein belongs to the type IA topoisomerase family. It depends on Mg(2+) as a cofactor.

The catalysed reaction is ATP-independent breakage of single-stranded DNA, followed by passage and rejoining.. In terms of biological role, releases the supercoiling and torsional tension of DNA, which is introduced during the DNA replication and transcription, by transiently cleaving and rejoining one strand of the DNA duplex. Introduces a single-strand break via transesterification at a target site in duplex DNA. The scissile phosphodiester is attacked by the catalytic tyrosine of the enzyme, resulting in the formation of a DNA-(5'-phosphotyrosyl)-enzyme intermediate and the expulsion of a 3'-OH DNA strand. The free DNA strand then undergoes passage around the unbroken strand, thus removing DNA supercoils. Finally, in the religation step, the DNA 3'-OH attacks the covalent intermediate to expel the active-site tyrosine and restore the DNA phosphodiester backbone. This chain is DNA topoisomerase 3, found in Salmonella typhimurium (strain LT2 / SGSC1412 / ATCC 700720).